Here is a 209-residue protein sequence, read N- to C-terminus: Urease accessory protein UreG (209 aa).

16–23 serves as a coordination point for GTP; the sequence is GPVGSGKT.

The protein belongs to the SIMIBI class G3E GTPase family. UreG subfamily. As to quaternary structure, homodimer. UreD, UreF and UreG form a complex that acts as a GTP-hydrolysis-dependent molecular chaperone, activating the urease apoprotein by helping to assemble the nickel containing metallocenter of UreC. The UreE protein probably delivers the nickel.

Its subcellular location is the cytoplasm. Functionally, facilitates the functional incorporation of the urease nickel metallocenter. This process requires GTP hydrolysis, probably effectuated by UreG. This Blochmanniella floridana protein is Urease accessory protein UreG.